The primary structure comprises 917 residues: MVNPSPASFWTQANALLRKNLTYQRKHIWTNVRLILVPLFLCLILLAIQQVLDALMKGVSDMSNCGGNVTLPGGICPIPNPPSLPPMLQIPQHELRSVKTDFFSYKDLPDKLCRETGSCPVTILFTGDKLPLGKALSANIFSTSFVVNSSDLLPTLANNVLGSTEAAGEDNYEDPGIASDLPIYSIQPSCSANSTWPLSLGQIQTAVKCVQGLCLWRNNSVEVNDELFKGSWRGNPAGMPNEIVAAYDLMSTDRKNFNVTIWYNSTYNDEFATGQALKLVRVPRSINLISNAYLKFLKGPGTRILFEFLKEVPKEETKMNQDIASLLGPLFFTWVVLLLFPVILTSLVYEKQERLRIIMKMHGLGDGPYWMISYAYFLTISMLYVISLVGFGSAIGLKYFRRNDYSIQFVFYFIYSNLQISLAFLVSSIFSKVKTVTVIAYILVYGTGLLGSFLFQKMIETQSFPEEWILAMELYPGFSLYRGLYEFSQYASRGNGMKWQDLSDSGMGEVFCIMSVEWFLALIVAYYIDQVFTSGKHPFFFLVNLFKSPSSLPRRPTVQRLDSKRVFIDMDKHDVTQERESVQKLRNEGSTGHAILCDNLKKVYPGRDGNPPKMAVRGLYLSVSSGECFGMLGPNGAGKTSFISMMTGLLKPSSGTALVQGLDICKDMNKVYTSMGVCPQHDLLWETLTGREHLLFYGRLKNIKGSDLTQAVEESLKSVSLYDGGVGDKPAGNYSGGMKRRLSVAISLIGNPKVVYLDEPSTGLDPASRKNLWNVIKRAKQNTAIILTTHSMEEAEFLCDRLGIFVDGGLQCIGNSKELKSRYGGSYVFTMTTSSKHEEEVERLVESVSPNAKKIYHLAGTQKFELPKQEVRIAEVFRAVEKAKANFTVFAWGLADTTLEDVFIKVARTAQAFISLS.

Transmembrane regions (helical) follow at residues 34 to 54 (LILV…VLDA), 323 to 343 (IASL…FPVI), 377 to 397 (FLTI…AIGL), 409 to 429 (FVFY…VSSI), 435 to 455 (TVTV…SFLF), and 508 to 528 (GEVF…AYYI). Positions 595–832 (ILCDNLKKVY…YGGSYVFTMT (238 aa)) constitute an ABC transporter domain. 633 to 640 (GPNGAGKT) contacts ATP.

It belongs to the ABC transporter superfamily. ABCA family. CPR flippase (TC 3.A.1.211) subfamily.

It localises to the membrane. This chain is ABC transporter A family member 12 (ABCA12), found in Arabidopsis thaliana (Mouse-ear cress).